Reading from the N-terminus, the 271-residue chain is Probable WRKY transcription factor 69 (271 aa).

Disordered regions lie at residues 1–47 (MHRR…NVEK) and 130–166 (PSSS…TVTA). The span at 9–18 (ESDDEEDETY) shows a compositional bias: acidic residues. Positions 64–130 (GEVYPPSDSW…YACDHNHPFP (67 aa)) form a DNA-binding region, WRKY.

This sequence belongs to the WRKY group II-e family.

The protein localises to the nucleus. Its function is as follows. Transcription factor. Interacts specifically with the W box (5'-(T)TGAC[CT]-3'), a frequently occurring elicitor-responsive cis-acting element. The chain is Probable WRKY transcription factor 69 (WRKY69) from Arabidopsis thaliana (Mouse-ear cress).